A 1872-amino-acid polypeptide reads, in one-letter code: Ral GTPase-activating protein subunit alpha-2 (1872 aa).

A phosphoserine mark is found at Ser-373, Ser-376, and Ser-379. The segment covering 446 to 469 (DKKDVAEEDADKLGLSETDSKEVS) has biased composition (basic and acidic residues). A disordered region spans residues 446-481 (DKKDVAEEDADKLGLSETDSKEVSSESSGHKRSSSW). Ser-486 and Ser-696 each carry phosphoserine. Disordered stretches follow at residues 711–730 (FRSA…NTVR) and 758–849 (QPVP…TGSD). Phosphothreonine; by PKB is present on Thr-715. A compositionally biased stretch (polar residues) spans 775–795 (SDSSQGQKVENSQNLSSSEPK). Residues 796 to 810 (SVQESKGHVTHEHEG) show a composition bias toward basic and acidic residues. Phosphoserine is present on residues Ser-819 and Ser-820. The span at 824 to 843 (LDLKEESQQTHGRCRERQKS) shows a compositional bias: basic and acidic residues. Ser-1592 is subject to Phosphoserine. The Rap-GAP domain occupies 1634 to 1842 (LKNLDSRQCR…EERALYLEAI (209 aa)).

As to quaternary structure, component of the heterodimeric RalGAP2 complex with RALGAPB. Heterodimerization is required for activity. Highly expressed in lung, liver, testis and thymus with lower levels in brain and heart (at protein level).

The protein localises to the cytoplasm. Its function is as follows. Catalytic subunit of the heterodimeric RalGAP2 complex which acts as a GTPase activator for the Ras-like small GTPases RALA and RALB. In Rattus norvegicus (Rat), this protein is Ral GTPase-activating protein subunit alpha-2.